The primary structure comprises 279 residues: Tryptophan synthase alpha chain (279 aa).

Residues Glu-50 and Asp-61 each act as proton acceptor in the active site.

Belongs to the TrpA family. In terms of assembly, tetramer of two alpha and two beta chains.

It carries out the reaction (1S,2R)-1-C-(indol-3-yl)glycerol 3-phosphate + L-serine = D-glyceraldehyde 3-phosphate + L-tryptophan + H2O. It participates in amino-acid biosynthesis; L-tryptophan biosynthesis; L-tryptophan from chorismate: step 5/5. In terms of biological role, the alpha subunit is responsible for the aldol cleavage of indoleglycerol phosphate to indole and glyceraldehyde 3-phosphate. In Brucella melitensis biotype 2 (strain ATCC 23457), this protein is Tryptophan synthase alpha chain.